A 505-amino-acid chain; its full sequence is RNA-splicing ligase RtcB homolog (505 aa).

Aspartate 119, cysteine 122, histidine 227, histidine 259, and histidine 353 together coordinate Mn(2+). 226-230 is a GMP binding site; sequence NHYAE. GMP contacts are provided by residues 353-354, 402-405, serine 409, 428-431, and lysine 504; these read HN, GGTM, and HGAG. Histidine 428 serves as the catalytic GMP-histidine intermediate.

The protein belongs to the RtcB family. In terms of assembly, catalytic component of the tRNA-splicing ligase complex. Mn(2+) serves as cofactor.

The protein resides in the nucleus. It is found in the cytoplasm. It catalyses the reaction a 3'-end 3'-phospho-ribonucleotide-RNA + a 5'-end dephospho-ribonucleoside-RNA + GTP = a ribonucleotidyl-ribonucleotide-RNA + GMP + diphosphate. The catalysed reaction is a 3'-end 2',3'-cyclophospho-ribonucleotide-RNA + a 5'-end dephospho-ribonucleoside-RNA + GTP + H2O = a ribonucleotidyl-ribonucleotide-RNA + GMP + diphosphate + H(+). Its function is as follows. Catalytic subunit of the tRNA-splicing ligase complex that acts by directly joining spliced tRNA halves to mature-sized tRNAs by incorporating the precursor-derived splice junction phosphate into the mature tRNA as a canonical 3',5'-phosphodiester. May act as an RNA ligase with broad substrate specificity, and may function toward other RNAs. This Danio rerio (Zebrafish) protein is RNA-splicing ligase RtcB homolog.